Here is a 360-residue protein sequence, read N- to C-terminus: MSDLASLETSILDQIAAAGDEAALEAVRVAALGKKGSISALLATLGKMSPDERKTQGAAINLAKDKVTQALAARRDVLKAAALDARLAAETIDVTLPLQDSPAETGRIHPLSQVMDELTTIFADMGFSIAEGPDVETDDYNFTKLNFPEGHPAREMHDTFFFNPKPDGSRMLLRTHTSPVQVRTMLTQKPPIRVICPGRTYRIDSDATHTPQFHQVEGLVIDKGSHLGHLKWILHEFCKAFFEVDHINMKFRPSFFPFTEPSLEVDIQCRRDKGEIRFGEGEDWLEILGCGMVHPNVLRACGIDPDEYQGFAWGMGIDRIAMLKYGMSDLRQLFEGDVRWLSHYGFKPLEVPTLAGGLST.

Residue E260 participates in Mg(2+) binding.

Belongs to the class-II aminoacyl-tRNA synthetase family. Phe-tRNA synthetase alpha subunit type 1 subfamily. As to quaternary structure, tetramer of two alpha and two beta subunits. Mg(2+) serves as cofactor.

Its subcellular location is the cytoplasm. The catalysed reaction is tRNA(Phe) + L-phenylalanine + ATP = L-phenylalanyl-tRNA(Phe) + AMP + diphosphate + H(+). This chain is Phenylalanine--tRNA ligase alpha subunit, found in Bradyrhizobium sp. (strain BTAi1 / ATCC BAA-1182).